A 573-amino-acid chain; its full sequence is AP-4 complex accessory subunit Tepsin (573 aa).

Positions 8–141 (RDRLSFLHRL…FSDAVPQPPS (134 aa)) constitute an ENTH domain. Disordered stretches follow at residues 136 to 155 (VPQP…MGAQ) and 194 to 311 (NAVR…NDCQ). Over residues 137 to 150 (PQPPSQPPQIPPPA) the composition is skewed to pro residues. The span at 217-229 (PAVTPSASHTHPN) shows a compositional bias: polar residues. Over residues 260 to 293 (SSPSSQNSSCTSNLSRASDSGSRSGSDSHSGTSR) the composition is skewed to low complexity. The span at 294–303 (EPGDLAERAE) shows a compositional bias: basic and acidic residues. S400 bears the Phosphoserine mark. The tract at residues 497-526 (CSSEQGTESEQRLENTDTPEDSSSPLPWSP) is disordered. The interval 526-536 (PNSLFAGMELV) is interaction with AP4B1. The interval 563–573 (SEPSAFAFLNM) is interaction with AP4E1.

Interacts with AP4B1 and AP4E1; the interaction is direct and mediates the association of TEPSIN with the adapter-like complex 4 (AP-4), a heterotetramer composed of AP4B1, AP4E1, AP4M1 and AP4S1.

Its subcellular location is the golgi apparatus. It localises to the trans-Golgi network membrane. The protein localises to the cytoplasmic vesicle. The protein resides in the cytoplasm. It is found in the cytosol. Its function is as follows. Associates with the adapter-like complex 4 (AP-4) and may therefore play a role in vesicular trafficking of proteins at the trans-Golgi network. This Mus musculus (Mouse) protein is AP-4 complex accessory subunit Tepsin.